A 276-amino-acid chain; its full sequence is Undecaprenyl-diphosphatase (276 aa).

The next 8 helical transmembrane spans lie at 1-21, 39-59, 84-104, 115-135, 159-179, 190-210, 222-242, and 253-273; these read MSWL…FLPV, AGAS…LVYF, YWLG…GLLF, LWLV…AEYA, LALV…LFLG, FLLA…DAFA, QLLV…AWFL, and FVGY…TGVV.

It belongs to the UppP family.

It localises to the cell membrane. It catalyses the reaction di-trans,octa-cis-undecaprenyl diphosphate + H2O = di-trans,octa-cis-undecaprenyl phosphate + phosphate + H(+). In terms of biological role, catalyzes the dephosphorylation of undecaprenyl diphosphate (UPP). Confers resistance to bacitracin. The sequence is that of Undecaprenyl-diphosphatase from Mycolicibacterium gilvum (strain PYR-GCK) (Mycobacterium gilvum (strain PYR-GCK)).